A 506-amino-acid polypeptide reads, in one-letter code: Histidine ammonia-lyase (506 aa).

Residues 143-145 constitute a cross-link (5-imidazolinone (Ala-Gly)); that stretch reads ASG. Position 144 is a 2,3-didehydroalanine (Ser) (Ser144).

This sequence belongs to the PAL/histidase family. In terms of processing, contains an active site 4-methylidene-imidazol-5-one (MIO), which is formed autocatalytically by cyclization and dehydration of residues Ala-Ser-Gly.

It localises to the cytoplasm. It carries out the reaction L-histidine = trans-urocanate + NH4(+). It participates in amino-acid degradation; L-histidine degradation into L-glutamate; N-formimidoyl-L-glutamate from L-histidine: step 1/3. The polypeptide is Histidine ammonia-lyase (Salmonella agona (strain SL483)).